The chain runs to 918 residues: Protein translocase subunit SecA (918 aa).

ATP contacts are provided by residues Gln87, 105–109, and Asp500; that span reads GEGKT. Residues 876–918 form a disordered region; that stretch reads AGALPVAETLERDTPESWRNTPRNAPCPCGSGKKYKHCHGQAR. Zn(2+) contacts are provided by Cys902, Cys904, Cys913, and His914. The segment covering 908–918 has biased composition (basic residues); that stretch reads KKYKHCHGQAR.

Belongs to the SecA family. As to quaternary structure, monomer and homodimer. Part of the essential Sec protein translocation apparatus which comprises SecA, SecYEG and auxiliary proteins SecDF-YajC and YidC. Zn(2+) is required as a cofactor.

The protein localises to the cell inner membrane. It localises to the cytoplasm. The catalysed reaction is ATP + H2O + cellular proteinSide 1 = ADP + phosphate + cellular proteinSide 2.. Its function is as follows. Part of the Sec protein translocase complex. Interacts with the SecYEG preprotein conducting channel. Has a central role in coupling the hydrolysis of ATP to the transfer of proteins into and across the cell membrane, serving both as a receptor for the preprotein-SecB complex and as an ATP-driven molecular motor driving the stepwise translocation of polypeptide chains across the membrane. The protein is Protein translocase subunit SecA of Rhodospirillum centenum (strain ATCC 51521 / SW).